The primary structure comprises 163 residues: Crossover junction endodeoxyribonuclease RuvC (163 aa).

Active-site residues include D4, E65, and D138. 3 residues coordinate Mg(2+): D4, E65, and D138.

The protein belongs to the RuvC family. Homodimer which binds Holliday junction (HJ) DNA. The HJ becomes 2-fold symmetrical on binding to RuvC with unstacked arms; it has a different conformation from HJ DNA in complex with RuvA. In the full resolvosome a probable DNA-RuvA(4)-RuvB(12)-RuvC(2) complex forms which resolves the HJ. Mg(2+) is required as a cofactor.

Its subcellular location is the cytoplasm. It carries out the reaction Endonucleolytic cleavage at a junction such as a reciprocal single-stranded crossover between two homologous DNA duplexes (Holliday junction).. Its function is as follows. The RuvA-RuvB-RuvC complex processes Holliday junction (HJ) DNA during genetic recombination and DNA repair. Endonuclease that resolves HJ intermediates. Cleaves cruciform DNA by making single-stranded nicks across the HJ at symmetrical positions within the homologous arms, yielding a 5'-phosphate and a 3'-hydroxyl group; requires a central core of homology in the junction. The consensus cleavage sequence is 5'-(A/T)TT(C/G)-3'. Cleavage occurs on the 3'-side of the TT dinucleotide at the point of strand exchange. HJ branch migration catalyzed by RuvA-RuvB allows RuvC to scan DNA until it finds its consensus sequence, where it cleaves and resolves the cruciform DNA. The protein is Crossover junction endodeoxyribonuclease RuvC of Corynebacterium jeikeium (strain K411).